The chain runs to 886 residues: DNA mismatch repair protein MutS (886 aa).

Residue 641 to 648 participates in ATP binding; it reads GPNMAGKS.

The protein belongs to the DNA mismatch repair MutS family.

Its function is as follows. This protein is involved in the repair of mismatches in DNA. It is possible that it carries out the mismatch recognition step. This protein has a weak ATPase activity. The protein is DNA mismatch repair protein MutS of Rickettsia felis (strain ATCC VR-1525 / URRWXCal2) (Rickettsia azadi).